Reading from the N-terminus, the 131-residue chain is Cystatin J (131 aa).

Residues 1–18 (MHLYLCVLVCLSIGMANC) form the signal peptide. One can recognise a Cystatin domain in the interval 35-109 (DEILLTGVEF…RMNLPTKCSF (75 aa)). Positions 68 to 72 (QVVAG) match the Secondary area of contact motif. 2 disulfide bridges follow: cysteine 86/cysteine 97 and cysteine 107/cysteine 128.

It belongs to the cystatin family.

It localises to the secreted. The protein resides in the nematocyst. Functionally, this recombinant protein inhibits the C1 cysteine protease papain (Ki is below 0.5 nM). This chain is Cystatin J, found in Cyanea capillata (Lion's mane jellyfish).